Here is a 155-residue protein sequence, read N- to C-terminus: Large ribosomal subunit protein uL15 (155 aa).

The span at 1–13 (MKLNELRDAEGAT) shows a compositional bias: basic and acidic residues. The interval 1-41 (MKLNELRDAEGATKARKRVGRGIGSGSGKTGGRGVKGQKSR) is disordered. Over residues 21 to 35 (RGIGSGSGKTGGRGV) the composition is skewed to gly residues.

Belongs to the universal ribosomal protein uL15 family. Part of the 50S ribosomal subunit.

In terms of biological role, binds to the 23S rRNA. The polypeptide is Large ribosomal subunit protein uL15 (Chelativorans sp. (strain BNC1)).